Consider the following 141-residue polypeptide: Pancreatic progenitor cell differentiation and proliferation factor-like protein (141 aa).

The segment at 72 to 141 (DQSACGGNGP…GAPKDTNSPQ (70 aa)) is disordered. Residues 95-105 (SLLQQEESQLL) show a composition bias toward low complexity. The segment covering 112–122 (GTVNRFRNSQT) has biased composition (polar residues).

This sequence belongs to the PPDPF family.

The chain is Pancreatic progenitor cell differentiation and proliferation factor-like protein from Bos taurus (Bovine).